The following is a 266-amino-acid chain: Dihydropteroate synthase (266 aa).

One can recognise a Pterin-binding domain in the interval 12–260 (AAIMGILNVT…DVKANQDIVA (249 aa)). Asn-19 contributes to the Mg(2+) binding site. (7,8-dihydropterin-6-yl)methyl diphosphate contacts are provided by residues Thr-59, Asp-93, Asn-112, Asp-176, Lys-212, and 248-250 (RVH).

Belongs to the DHPS family. Homodimer or homotrimer. Requires Mg(2+) as cofactor.

The enzyme catalyses (7,8-dihydropterin-6-yl)methyl diphosphate + 4-aminobenzoate = 7,8-dihydropteroate + diphosphate. It functions in the pathway cofactor biosynthesis; tetrahydrofolate biosynthesis; 7,8-dihydrofolate from 2-amino-4-hydroxy-6-hydroxymethyl-7,8-dihydropteridine diphosphate and 4-aminobenzoate: step 1/2. Functionally, catalyzes the condensation of para-aminobenzoate (pABA) with 6-hydroxymethyl-7,8-dihydropterin diphosphate (DHPt-PP) to form 7,8-dihydropteroate (H2Pte), the immediate precursor of folate derivatives. This chain is Dihydropteroate synthase (folP), found in Streptococcus pyogenes serotype M18 (strain MGAS8232).